The chain runs to 485 residues: Glutamate--tRNA ligase (485 aa).

A 'HIGH' region motif is present at residues 12–22; the sequence is PSPTGEPHVGT. The short motif at 253 to 257 is the 'KMSKS' region element; sequence KLSKR. Lys-256 lines the ATP pocket.

The protein belongs to the class-I aminoacyl-tRNA synthetase family. Glutamate--tRNA ligase type 1 subfamily. As to quaternary structure, monomer.

The protein resides in the cytoplasm. It catalyses the reaction tRNA(Glu) + L-glutamate + ATP = L-glutamyl-tRNA(Glu) + AMP + diphosphate. Catalyzes the attachment of glutamate to tRNA(Glu) in a two-step reaction: glutamate is first activated by ATP to form Glu-AMP and then transferred to the acceptor end of tRNA(Glu). This is Glutamate--tRNA ligase from Sinorhizobium medicae (strain WSM419) (Ensifer medicae).